Reading from the N-terminus, the 161-residue chain is MSVTLHTDVGDIKIEVFCERTPKTCENFLALCASNYYNGCVFHRNIKGFMVQTGDPTGTGRGGSSIWAKKFEDEYSEYLKHNVRGVVSMANNGPNTNGSQFFITYGKQPHLDMKYTVFGKVIDGLETLDELEKLPVNEKTYRPLNDVHIKDITIHANPFAQ.

At Ser-2 the chain carries N-acetylserine. Residues 2–154 (SVTLHTDVGD…NDVHIKDITI (153 aa)) form the PPIase cyclophilin-type domain. Arg-61 carries the omega-N-methylarginine modification.

This sequence belongs to the cyclophilin-type PPIase family. PPIL3 subfamily. As to quaternary structure, identified in the spliceosome C complex.

The enzyme catalyses [protein]-peptidylproline (omega=180) = [protein]-peptidylproline (omega=0). Its function is as follows. PPIases accelerate the folding of proteins. It catalyzes the cis-trans isomerization of proline imidic peptide bonds in oligopeptides. May be involved in pre-mRNA splicing. The chain is Peptidyl-prolyl cis-trans isomerase-like 3 (Ppil3) from Mus musculus (Mouse).